Here is a 429-residue protein sequence, read N- to C-terminus: C4-dicarboxylate transport protein (429 aa).

Transmembrane regions (helical) follow at residues 9–29, 45–65, 79–99, 149–169, 185–205, 223–243, 308–328, and 356–376; these read VLYVQVIFAIVVGVILGHYYP, LIKMVIGPIIFCTVVTGIAGM, LLYFEIVSTFALVLGLAATHI, GEILQILLIALLFGSVLAHLG, VLFGIVHIVTKLAPIGAFGAM, LIGTFYLTSVVFVLVVLGAIA, IYMTMAVLFIAQATNIELTWM, and AATLAVVPTIPLSGMVLILGI.

The protein belongs to the dicarboxylate/amino acid:cation symporter (DAACS) (TC 2.A.23) family.

The protein resides in the cell inner membrane. Functionally, responsible for the transport of dicarboxylates such as succinate, fumarate, and malate from the periplasm across the membrane. The chain is C4-dicarboxylate transport protein from Burkholderia multivorans (strain ATCC 17616 / 249).